Consider the following 108-residue polypeptide: ATP synthase peripheral stalk subunit F6, mitochondrial (108 aa).

The transit peptide at 1–32 (MILQRLFRFSSVIRSAVSVHLRRNIGVTAVAF) directs the protein to the mitochondrion. N6-acetyllysine occurs at positions 41 and 46. Ser65 bears the Phosphoserine mark. Lys79 bears the N6-acetyllysine mark. Lys94 and Lys99 each carry N6-acetyllysine; alternate. Lys94 and Lys99 each carry N6-succinyllysine; alternate. An N6-acetyllysine modification is found at Lys105.

This sequence belongs to the eukaryotic ATPase subunit F6 family. In terms of assembly, component of the ATP synthase complex composed at least of ATP5F1A/subunit alpha, ATP5F1B/subunit beta, ATP5MC1/subunit c (homooctomer), MT-ATP6/subunit a, MT-ATP8/subunit 8, ATP5ME/subunit e, ATP5MF/subunit f, ATP5MG/subunit g, ATP5MK/subunit k, ATP5MJ/subunit j, ATP5F1C/subunit gamma, ATP5F1D/subunit delta, ATP5F1E/subunit epsilon, ATP5PF/subunit F6, ATP5PB/subunit b, ATP5PD/subunit d, ATP5PO/subunit OSCP. ATP synthase complex consists of a soluble F(1) head domain (subunits alpha(3) and beta(3)) - the catalytic core - and a membrane F(0) domain - the membrane proton channel (subunits c, a, 8, e, f, g, k and j). These two domains are linked by a central stalk (subunits gamma, delta, and epsilon) rotating inside the F1 region and a stationary peripheral stalk (subunits F6, b, d, and OSCP).

It is found in the mitochondrion. The protein localises to the mitochondrion inner membrane. Its function is as follows. Subunit F6, of the mitochondrial membrane ATP synthase complex (F(1)F(0) ATP synthase or Complex V) that produces ATP from ADP in the presence of a proton gradient across the membrane which is generated by electron transport complexes of the respiratory chain. ATP synthase complex consist of a soluble F(1) head domain - the catalytic core - and a membrane F(1) domain - the membrane proton channel. These two domains are linked by a central stalk rotating inside the F(1) region and a stationary peripheral stalk. During catalysis, ATP synthesis in the catalytic domain of F(1) is coupled via a rotary mechanism of the central stalk subunits to proton translocation. In vivo, can only synthesize ATP although its ATP hydrolase activity can be activated artificially in vitro. Part of the complex F(0) domain. Part of the complex F(0) domain and the peripheric stalk, which acts as a stator to hold the catalytic alpha(3)beta(3) subcomplex and subunit a/ATP6 static relative to the rotary elements. This Homo sapiens (Human) protein is ATP synthase peripheral stalk subunit F6, mitochondrial.